The sequence spans 104 residues: Large ribosomal subunit protein uL24 (104 aa).

Belongs to the universal ribosomal protein uL24 family. As to quaternary structure, part of the 50S ribosomal subunit.

In terms of biological role, one of two assembly initiator proteins, it binds directly to the 5'-end of the 23S rRNA, where it nucleates assembly of the 50S subunit. Its function is as follows. One of the proteins that surrounds the polypeptide exit tunnel on the outside of the subunit. The chain is Large ribosomal subunit protein uL24 from Methylorubrum extorquens (strain PA1) (Methylobacterium extorquens).